The sequence spans 64 residues: Translation machinery-associated protein 7B (64 aa).

The tract at residues 1 to 38 is disordered; the sequence is MSSHEGGKKKALKQPKKQAKEMDEEEKAFKQKQKEEQK. Basic and acidic residues predominate over residues 27–38; sequence KAFKQKQKEEQK.

The protein belongs to the TMA7 family.

This Homo sapiens (Human) protein is Translation machinery-associated protein 7B.